Here is a 155-residue protein sequence, read N- to C-terminus: Transcriptional repressor NrdR (155 aa).

The segment at 3 to 34 (CPFCGHSNTQVLDTRMSEDGDAVRRRRRCEAC) is a zinc-finger region. Positions 49-139 (PAIVKKNGSR…VYRSFEDVSE (91 aa)) constitute an ATP-cone domain.

This sequence belongs to the NrdR family. Requires Zn(2+) as cofactor.

Its function is as follows. Negatively regulates transcription of bacterial ribonucleotide reductase nrd genes and operons by binding to NrdR-boxes. The protein is Transcriptional repressor NrdR of Cupriavidus necator (strain ATCC 17699 / DSM 428 / KCTC 22496 / NCIMB 10442 / H16 / Stanier 337) (Ralstonia eutropha).